The primary structure comprises 500 residues: Protein-tyrosine sulfotransferase (500 aa).

A signal peptide spans methionine 1–alanine 24. The Lumenal portion of the chain corresponds to glutamate 25–lysine 467. Residues arginine 121 and glutamate 142 contribute to the active site. N-linked (GlcNAc...) asparagine glycosylation is found at asparagine 156, asparagine 248, asparagine 315, asparagine 343, asparagine 359, and asparagine 395. Residues leucine 468–valine 488 traverse the membrane as a helical segment. The Cytoplasmic portion of the chain corresponds to asparagine 489–isoleucine 500.

Expressed throughout the plant body, highest levels of expression are in the root apical meristem.

It is found in the golgi apparatus membrane. It carries out the reaction L-tyrosyl-[protein] + 3'-phosphoadenylyl sulfate = O-sulfo-L-tyrosine-[protein] + adenosine 3',5'-bisphosphate + H(+). In terms of biological role, catalyzes the O-sulfation of tyrosine residues within acidic motifs of polypeptides. This chain is Protein-tyrosine sulfotransferase (TPST), found in Arabidopsis thaliana (Mouse-ear cress).